Here is a 507-residue protein sequence, read N- to C-terminus: Rhomboid protease GluP (507 aa).

The next 5 helical transmembrane spans lie at 179–199 (FTYLFIALQILMFFLLEINGG), 229–249 (IVLHIGIAHLAFNTLALWSVG), 261–281 (FLLIYLAAGITGSIASFVFSP), 283–303 (PSAGASGAIFGCLGALLYVAL), and 312–332 (TIGTNIIVIIIINLGFGFAVS). The active-site Nucleophile is S288. The active-site Charge relay system is the H339. 2 consecutive transmembrane segments (helical) span residues 340–360 (IGGLIGGFFAAAALGLPKAGA) and 365–385 (LLSAVLLIALAVGFLYYGLHS). 2 TPR repeats span residues 424–457 (ADLLKILAVSDIQIGEYDQAVSLLERAVKKEPKD) and 458–491 (HASYYNLALLYAEKNELAQAEKAIQTAVKLKPKE).

It belongs to the peptidase S54 family.

The protein localises to the cell membrane. The enzyme catalyses Cleaves type-1 transmembrane domains using a catalytic dyad composed of serine and histidine that are contributed by different transmembrane domains.. Inhibited by dichloroisocoumarin (DCI) and N-p-tosyl-L-phenylalanine chloromethyl ketone (TPCK), but not by other serine protease inhibitors such as sulfonyl fluoride PMSF and 4-(2-aminoethyl)benzenesulfonyl fluoride (AEBSF). Rhomboid-type serine protease that catalyzes intramembrane proteolysis. Important for normal cell division and sporulation. May act as a glucose exporter. The protein is Rhomboid protease GluP (gluP) of Bacillus subtilis (strain 168).